We begin with the raw amino-acid sequence, 199 residues long: Crossover junction endodeoxyribonuclease RuvC (199 aa).

Active-site residues include D7, E68, and D141. Mg(2+) contacts are provided by D7, E68, and D141.

Belongs to the RuvC family. Homodimer which binds Holliday junction (HJ) DNA. The HJ becomes 2-fold symmetrical on binding to RuvC with unstacked arms; it has a different conformation from HJ DNA in complex with RuvA. In the full resolvosome a probable DNA-RuvA(4)-RuvB(12)-RuvC(2) complex forms which resolves the HJ. The cofactor is Mg(2+).

The protein resides in the cytoplasm. The catalysed reaction is Endonucleolytic cleavage at a junction such as a reciprocal single-stranded crossover between two homologous DNA duplexes (Holliday junction).. Its function is as follows. The RuvA-RuvB-RuvC complex processes Holliday junction (HJ) DNA during genetic recombination and DNA repair. Endonuclease that resolves HJ intermediates. Cleaves cruciform DNA by making single-stranded nicks across the HJ at symmetrical positions within the homologous arms, yielding a 5'-phosphate and a 3'-hydroxyl group; requires a central core of homology in the junction. The consensus cleavage sequence is 5'-(A/T)TT(C/G)-3'. Cleavage occurs on the 3'-side of the TT dinucleotide at the point of strand exchange. HJ branch migration catalyzed by RuvA-RuvB allows RuvC to scan DNA until it finds its consensus sequence, where it cleaves and resolves the cruciform DNA. The polypeptide is Crossover junction endodeoxyribonuclease RuvC (Saccharopolyspora erythraea (strain ATCC 11635 / DSM 40517 / JCM 4748 / NBRC 13426 / NCIMB 8594 / NRRL 2338)).